We begin with the raw amino-acid sequence, 75 residues long: MNRSKKNSRKRLPAIRSGEFIDYRNISLLRRFVSEQGRILSRRTNRLTSKQQRVLTAAIKQARILASLPFPNSEN.

Belongs to the bacterial ribosomal protein bS18 family. As to quaternary structure, part of the 30S ribosomal subunit.

The protein localises to the plastid. The polypeptide is Small ribosomal subunit protein bS18c (Aneura mirabilis (Parasitic liverwort)).